The chain runs to 279 residues: Octanoyl-[GcvH]:protein N-octanoyltransferase (279 aa).

The region spanning 48–253 (ETSPPVIRLW…TLEKLSDEIV (206 aa)) is the BPL/LPL catalytic domain. C152 functions as the Acyl-thioester intermediate in the catalytic mechanism.

It belongs to the octanoyltransferase LipL family.

It catalyses the reaction N(6)-octanoyl-L-lysyl-[glycine-cleavage complex H protein] + L-lysyl-[lipoyl-carrier protein] = N(6)-octanoyl-L-lysyl-[lipoyl-carrier protein] + L-lysyl-[glycine-cleavage complex H protein]. It participates in protein modification; protein lipoylation via endogenous pathway; protein N(6)-(lipoyl)lysine from octanoyl-[acyl-carrier-protein]. In terms of biological role, catalyzes the amidotransfer (transamidation) of the octanoyl moiety from octanoyl-GcvH to the lipoyl domain of the E2 subunit of lipoate-dependent enzymes. The polypeptide is Octanoyl-[GcvH]:protein N-octanoyltransferase (Oceanobacillus iheyensis (strain DSM 14371 / CIP 107618 / JCM 11309 / KCTC 3954 / HTE831)).